Reading from the N-terminus, the 1083-residue chain is Voltage-gated inwardly rectifying potassium channel KCNH3 (1083 aa).

Topologically, residues 1–228 (MPAMRGLLAP…HCGALRATWD (228 aa)) are cytoplasmic. Positions 18 to 90 (IATRFDGTHS…QQIRKALDEH (73 aa)) constitute a PAS domain. In terms of domain architecture, PAC spans 93 to 145 (FKAELILYRKSGLPFWCLLDVIPIKNEKGEVALFLVSHKDISETKNRGGPDRW). The span at 137–150 (KNRGGPDRWKETGG) shows a compositional bias: basic and acidic residues. The segment at 137–157 (KNRGGPDRWKETGGGRRRYGR) is disordered. A helical transmembrane segment spans residues 229-249 (GFILLATLYVAVTVPYSVCVS). Residues 250 to 259 (TAREPSAARG) are Extracellular-facing. A helical membrane pass occupies residues 260–280 (PPSVCDLAVEVLFILDIVLNF). Topologically, residues 281–302 (RTTFVSKSGQVVFAPKSICLHY) are cytoplasmic. The chain crosses the membrane as a helical span at residues 303–323 (VTTWFLLDVIAALPFDLLHAF). Topologically, residues 324–331 (KVNVYFGA) are extracellular. Residues 332–352 (HLLKTVRLLRLLRLLPRLDRY) traverse the membrane as a helical; Voltage-sensor segment. Topologically, residues 353–361 (SQYSAVVLT) are cytoplasmic. The chain crosses the membrane as a helical span at residues 362 to 382 (LLMAVFALLAHWVACVWFYIG). Residues 383–453 (QREIESSESE…GGPSLRSAYI (71 aa)) lie on the Extracellular side of the membrane. 3 N-linked (GlcNAc...) asparagine glycosylation sites follow: asparagine 421, asparagine 428, and asparagine 436. Residues 454–474 (TSLYFALSSLTSVGFGNVSAN) constitute an intramembrane region (pore-forming). The short motif at 465–470 (SVGFGN) is the Selectivity filter element. Over 475–479 (TDTEK) the chain is Extracellular. The chain crosses the membrane as a helical span at residues 480–500 (IFSICTMLIGALMHAVVFGNV). The Cytoplasmic segment spans residues 501-1083 (TAIIQRMYAR…QWTQEEGTGV (583 aa)). An a nucleoside 3',5'-cyclic phosphate-binding site is contributed by 582–697 (LFEAASRGCL…FAPRFSRGLR (116 aa)). 3 disordered regions span residues 729 to 810 (EEKE…LRLP), 832 to 873 (CGSD…SEAR), and 972 to 1055 (MAPW…ALPW). Positions 773-785 (TAPRPRLGGRGRP) are enriched in basic residues. Positions 844 to 861 (GQSGPECSSSPSPGPESG) are enriched in low complexity.

Belongs to the potassium channel family. H (Eag) (TC 1.A.1.20) subfamily. Kv12.2/KCNH3 sub-subfamily. The potassium channel is probably composed of a homo- or heterotetrameric complex of pore-forming alpha subunits that can associate with modulating beta subunits. Interacts with KCNE1 and KCNE3; these interactions regulate KCNH3 trafficking to the plasma membrane and its subsequent voltage-gated potassium channel activity. Post-translationally, N-glycosylated. N-glycosylation mediates traffick to the cell membrane but is not necessary for voltage-gated potassium channel activity. In terms of tissue distribution, detected only in brain, in particular in the telencephalon. Detected in the cerebral cortex, occipital pole, frontal and temporal lobe, putamen, amygdala, hippocampus and caudate nucleus.

It localises to the cell membrane. The catalysed reaction is K(+)(in) = K(+)(out). In terms of biological role, pore-forming (alpha) subunit of a voltage-gated inwardly rectifying potassium channel. Charactherized by a fast rate of activation during depolarization followed by a rapid inactivation at much more depolarized value causing inward rectification due to a C-type inactivation mechanism. Exhibits a rapid recovery from inactivation. This is Voltage-gated inwardly rectifying potassium channel KCNH3 from Homo sapiens (Human).